The sequence spans 191 residues: Pyridoxal 5'-phosphate synthase subunit PdxT (191 aa).

Residue 46–48 participates in L-glutamine binding; the sequence is GES. Cys-75 functions as the Nucleophile in the catalytic mechanism. L-glutamine contacts are provided by residues Arg-101 and 129 to 130; that span reads IR. Active-site charge relay system residues include His-165 and Glu-167.

This sequence belongs to the glutaminase PdxT/SNO family. In the presence of PdxS, forms a dodecamer of heterodimers. Only shows activity in the heterodimer.

The enzyme catalyses aldehydo-D-ribose 5-phosphate + D-glyceraldehyde 3-phosphate + L-glutamine = pyridoxal 5'-phosphate + L-glutamate + phosphate + 3 H2O + H(+). It catalyses the reaction L-glutamine + H2O = L-glutamate + NH4(+). It participates in cofactor biosynthesis; pyridoxal 5'-phosphate biosynthesis. Its function is as follows. Catalyzes the hydrolysis of glutamine to glutamate and ammonia as part of the biosynthesis of pyridoxal 5'-phosphate. The resulting ammonia molecule is channeled to the active site of PdxS. The chain is Pyridoxal 5'-phosphate synthase subunit PdxT from Staphylococcus saprophyticus subsp. saprophyticus (strain ATCC 15305 / DSM 20229 / NCIMB 8711 / NCTC 7292 / S-41).